The following is a 1096-amino-acid chain: Carbamoyl phosphate synthase large chain (1096 aa).

Residues 1 to 402 (MPKRDDINSV…ALQKALRSLE (402 aa)) form a carboxyphosphate synthetic domain region. Arg-129, Arg-169, Gly-175, Gly-176, Glu-208, Ile-210, Glu-215, Gly-241, Val-242, His-243, Gln-285, and Glu-299 together coordinate ATP. The ATP-grasp 1 domain maps to 133–328 (KDLVIESGAD…IAKIAAKLAI (196 aa)). 3 residues coordinate Mg(2+): Gln-285, Glu-299, and Asn-301. Residues Gln-285, Glu-299, and Asn-301 each contribute to the Mn(2+) site. The tract at residues 403-547 (KRGSSFHWGP…YSSYDSETEI (145 aa)) is oligomerization domain. The interval 548 to 950 (VPSDRRKVII…AFAKSQEAAF (403 aa)) is carbamoyl phosphate synthetic domain. Residues 676–870 (SGILDTAGLV…LAKAASLVMV (195 aa)) form the ATP-grasp 2 domain. ATP contacts are provided by Arg-712, Arg-754, Leu-756, Glu-761, Gly-786, Ile-787, His-788, Ser-789, Gln-829, and Glu-841. The Mg(2+) site is built by Gln-829, Glu-841, and Asn-843. Mn(2+) contacts are provided by Gln-829, Glu-841, and Asn-843. One can recognise an MGS-like domain in the interval 951 to 1095 (GGLPLSGTVF…QDYAIAREAR (145 aa)). The interval 951 to 1096 (GGLPLSGTVF…DYAIAREARR (146 aa)) is allosteric domain.

It belongs to the CarB family. As to quaternary structure, composed of two chains; the small (or glutamine) chain promotes the hydrolysis of glutamine to ammonia, which is used by the large (or ammonia) chain to synthesize carbamoyl phosphate. Tetramer of heterodimers (alpha,beta)4. Mg(2+) is required as a cofactor. Mn(2+) serves as cofactor.

It carries out the reaction hydrogencarbonate + L-glutamine + 2 ATP + H2O = carbamoyl phosphate + L-glutamate + 2 ADP + phosphate + 2 H(+). The enzyme catalyses hydrogencarbonate + NH4(+) + 2 ATP = carbamoyl phosphate + 2 ADP + phosphate + 2 H(+). It functions in the pathway amino-acid biosynthesis; L-arginine biosynthesis; carbamoyl phosphate from bicarbonate: step 1/1. The protein operates within pyrimidine metabolism; UMP biosynthesis via de novo pathway; (S)-dihydroorotate from bicarbonate: step 1/3. Functionally, large subunit of the glutamine-dependent carbamoyl phosphate synthetase (CPSase). CPSase catalyzes the formation of carbamoyl phosphate from the ammonia moiety of glutamine, carbonate, and phosphate donated by ATP, constituting the first step of 2 biosynthetic pathways, one leading to arginine and/or urea and the other to pyrimidine nucleotides. The large subunit (synthetase) binds the substrates ammonia (free or transferred from glutamine from the small subunit), hydrogencarbonate and ATP and carries out an ATP-coupled ligase reaction, activating hydrogencarbonate by forming carboxy phosphate which reacts with ammonia to form carbamoyl phosphate. In Clavibacter michiganensis subsp. michiganensis (strain NCPPB 382), this protein is Carbamoyl phosphate synthase large chain.